We begin with the raw amino-acid sequence, 115 residues long: NAD(P)H-quinone oxidoreductase subunit M (115 aa).

The protein belongs to the complex I NdhM subunit family. As to quaternary structure, NDH-1 can be composed of about 15 different subunits; different subcomplexes with different compositions have been identified which probably have different functions.

Its subcellular location is the cellular thylakoid membrane. It catalyses the reaction a plastoquinone + NADH + (n+1) H(+)(in) = a plastoquinol + NAD(+) + n H(+)(out). It carries out the reaction a plastoquinone + NADPH + (n+1) H(+)(in) = a plastoquinol + NADP(+) + n H(+)(out). NDH-1 shuttles electrons from an unknown electron donor, via FMN and iron-sulfur (Fe-S) centers, to quinones in the respiratory and/or the photosynthetic chain. The immediate electron acceptor for the enzyme in this species is believed to be plastoquinone. Couples the redox reaction to proton translocation, and thus conserves the redox energy in a proton gradient. Cyanobacterial NDH-1 also plays a role in inorganic carbon-concentration. This is NAD(P)H-quinone oxidoreductase subunit M from Prochlorococcus marinus (strain NATL2A).